The sequence spans 374 residues: MSTAGKVIKCKAAVLWEQKKPFSIEEVEVAPPKAHEVRIKMVAAGICRSDDHVVSGTLVAPLPVIAGHEAAGIVESIGEGVTTVRPGDKVIPLFIPQCGKCSVCKHPEGNLCLKNLSMPRGTMQDGTSRFTCRGKPIHHFLGTSTFSQYTVVDEISVAKIDAASPLEKVCLVGCGFSTGYGSAVKVAKVTQGSTCAVFGLGGVGLSVIMGCKAAGAARIIGVDINKDKFAKAKEVGATECVNPQDYKKPIQEVLTEMSNGGVDFSFEVIGRLDTMVAALSCCQEAYGVSVIVGVPPDSQNLSMNPMLLLSGRTWKGAIFGGFKSKDSVPKLVADFMAKKFALDPLITHVLPFEKINEGFDLLRSGKSIRTILTF.

N-acetylserine is present on Ser-2. The Zn(2+) site is built by Cys-47, His-68, Cys-98, Cys-101, Cys-104, Cys-112, and Cys-174. NAD(+) contacts are provided by residues 199–204 (GLGGVG), Asp-223, Lys-228, 292–294 (VGV), and Arg-369.

The protein belongs to the zinc-containing alcohol dehydrogenase family. Class-I subfamily. Dimer of identical or non-identical chains of two types (E and S) coded by 2 separate genes at different loci. It depends on Zn(2+) as a cofactor.

The protein localises to the cytoplasm. The catalysed reaction is a primary alcohol + NAD(+) = an aldehyde + NADH + H(+). It carries out the reaction a secondary alcohol + NAD(+) = a ketone + NADH + H(+). The sequence is that of Alcohol dehydrogenase S chain from Equus caballus (Horse).